Here is a 451-residue protein sequence, read N- to C-terminus: UPF0210 protein CA_C0479 (451 aa).

The protein belongs to the UPF0210 family. In terms of assembly, homodimer.

This is UPF0210 protein CA_C0479 from Clostridium acetobutylicum (strain ATCC 824 / DSM 792 / JCM 1419 / IAM 19013 / LMG 5710 / NBRC 13948 / NRRL B-527 / VKM B-1787 / 2291 / W).